Here is a 97-residue protein sequence, read N- to C-terminus: Large ribosomal subunit protein bL28 (97 aa).

The interval 1 to 20 is disordered; that stretch reads MSRRCELTAKGPQVGHKVSH.

Belongs to the bacterial ribosomal protein bL28 family.

This is Large ribosomal subunit protein bL28 from Afipia carboxidovorans (strain ATCC 49405 / DSM 1227 / KCTC 32145 / OM5) (Oligotropha carboxidovorans).